A 212-amino-acid polypeptide reads, in one-letter code: MNDLAHMRTNYVRSVLSEETAGFDPLALFSLWFSEAKEEGELEPNAMSLSTVNTDGKPSVRIVLLKGLIRNEFQFFTNYSSHKGKDIEQNRNVALTFFWPKMERQIRIEGTVTKIPKEESEAYFKIRPRESQLGALTSNQSSVVVSREELETKFQTLEKEWEGKEIPMPESWGGYSVSPNKIEFWQGRAGRLHDRIVFERKNENWIRSRLSP.

Substrate contacts are provided by residues 8-11 (RTNY) and K66. FMN-binding positions include 61-66 (RIVLLK), 76-77 (FT), K83, and Q105. Substrate-binding residues include Y123, R127, and S131. FMN is bound by residues 140-141 (QS) and W185. Residue 191–193 (RLH) participates in substrate binding. R195 contributes to the FMN binding site.

This sequence belongs to the pyridoxamine 5'-phosphate oxidase family. As to quaternary structure, homodimer. FMN serves as cofactor.

The enzyme catalyses pyridoxamine 5'-phosphate + O2 + H2O = pyridoxal 5'-phosphate + H2O2 + NH4(+). The catalysed reaction is pyridoxine 5'-phosphate + O2 = pyridoxal 5'-phosphate + H2O2. The protein operates within cofactor metabolism; pyridoxal 5'-phosphate salvage; pyridoxal 5'-phosphate from pyridoxamine 5'-phosphate: step 1/1. It functions in the pathway cofactor metabolism; pyridoxal 5'-phosphate salvage; pyridoxal 5'-phosphate from pyridoxine 5'-phosphate: step 1/1. In terms of biological role, catalyzes the oxidation of either pyridoxine 5'-phosphate (PNP) or pyridoxamine 5'-phosphate (PMP) into pyridoxal 5'-phosphate (PLP). This Leptospira biflexa serovar Patoc (strain Patoc 1 / Ames) protein is Pyridoxine/pyridoxamine 5'-phosphate oxidase.